Reading from the N-terminus, the 212-residue chain is Imidazole glycerol phosphate synthase subunit HisH (212 aa).

Positions 3-212 (TVAVIDYGMG…QNFIAWDGRW (210 aa)) constitute a Glutamine amidotransferase type-1 domain. Residue C81 is the Nucleophile of the active site. Active-site residues include H190 and E192.

In terms of assembly, heterodimer of HisH and HisF.

It is found in the cytoplasm. The enzyme catalyses 5-[(5-phospho-1-deoxy-D-ribulos-1-ylimino)methylamino]-1-(5-phospho-beta-D-ribosyl)imidazole-4-carboxamide + L-glutamine = D-erythro-1-(imidazol-4-yl)glycerol 3-phosphate + 5-amino-1-(5-phospho-beta-D-ribosyl)imidazole-4-carboxamide + L-glutamate + H(+). The catalysed reaction is L-glutamine + H2O = L-glutamate + NH4(+). It participates in amino-acid biosynthesis; L-histidine biosynthesis; L-histidine from 5-phospho-alpha-D-ribose 1-diphosphate: step 5/9. Functionally, IGPS catalyzes the conversion of PRFAR and glutamine to IGP, AICAR and glutamate. The HisH subunit catalyzes the hydrolysis of glutamine to glutamate and ammonia as part of the synthesis of IGP and AICAR. The resulting ammonia molecule is channeled to the active site of HisF. In Pseudomonas putida (strain ATCC 47054 / DSM 6125 / CFBP 8728 / NCIMB 11950 / KT2440), this protein is Imidazole glycerol phosphate synthase subunit HisH.